The primary structure comprises 175 residues: Peptide deformylase (175 aa).

Fe cation is bound by residues cysteine 96 and histidine 138. Glutamate 139 is a catalytic residue. Residue histidine 142 coordinates Fe cation.

The protein belongs to the polypeptide deformylase family. Requires Fe(2+) as cofactor.

The enzyme catalyses N-terminal N-formyl-L-methionyl-[peptide] + H2O = N-terminal L-methionyl-[peptide] + formate. Functionally, removes the formyl group from the N-terminal Met of newly synthesized proteins. Requires at least a dipeptide for an efficient rate of reaction. N-terminal L-methionine is a prerequisite for activity but the enzyme has broad specificity at other positions. The polypeptide is Peptide deformylase (Rhodopseudomonas palustris (strain ATCC BAA-98 / CGA009)).